Reading from the N-terminus, the 548-residue chain is MTSTFAPTPLTQRAAWQALAAHYEQIREIHLRALFAEDPSRGERFALEAEGFYLDYSKNRLTDETLRLLSVLAEESDLRGRIEAMFSGEKINTTEQRSVLHTALRAPRGATVIEDGENVVPEVHAVLDRMAEFADRVRGGEWRGYTGRRIRTVVNIGIGGSYLGPDMAYDALKHYSDRDLKVRFAANVDGSNFAEVIHDLEPDETLFIVCSKTFTTLETMTNAHSARQWCLAALGDEQAIAKHFVAVSTNAAEVEKFGIDTAHMFGFWDWVGGRYSMDSAIGLSTMIAVGPEHFRAMLAGFHAMDEHFRTAPFERNLPVLMALIGLWYNNFFGAQTLAVLPYDYYLGKLPAYLQQLDMESNGKHVDIDGQPVTYQTGPIIWGQPGTDGQHSFYQLIHQGTKLIPCDFIGFCQTLNPIAPHHDQLMANFFAQTEALAFGKTEAEVRAEGVADWLLPHRVFEGNRPTNTLLAERLTPEVLGKLIALYEHKVFTQGVIWNLDSFDQWGVELGKVLAGRIIPELESAEEPELAHDSSTNALIRRYRRAKRQN.

Glu359 functions as the Proton donor in the catalytic mechanism. Residues His390 and Lys510 contribute to the active site.

Belongs to the GPI family.

It is found in the cytoplasm. It carries out the reaction alpha-D-glucose 6-phosphate = beta-D-fructose 6-phosphate. It functions in the pathway carbohydrate biosynthesis; gluconeogenesis. The protein operates within carbohydrate degradation; glycolysis; D-glyceraldehyde 3-phosphate and glycerone phosphate from D-glucose: step 2/4. Functionally, catalyzes the reversible isomerization of glucose-6-phosphate to fructose-6-phosphate. The polypeptide is Glucose-6-phosphate isomerase (Gloeobacter violaceus (strain ATCC 29082 / PCC 7421)).